A 1416-amino-acid chain; its full sequence is Uveal autoantigen with coiled-coil domains and ankyrin repeats (1416 aa).

Met-1 carries the N-acetylmethionine modification. The disordered stretch occupies residues 1 to 24 (MKSLKSRLRRQDVPGPASSGAAAA). 6 ANK repeats span residues 38–66 (LMKA…KLDV), 67–96 (EGRS…DITT), 100–129 (AGRN…PTEH), 133–162 (QGRT…SVNA), 166–195 (DGRT…DVNS), and 199–228 (QNRT…DISL). Coiled-coil stretches lie at residues 286-374 (VKSH…NRFK) and 438-1386 (ENEI…IYRT). Lys-1035 is covalently cross-linked (Glycyl lysine isopeptide (Lys-Gly) (interchain with G-Cter in SUMO2)).

As to quaternary structure, component of the apoptosome complex, composed of APAF1, pro-caspase-9 and UACA. In the complex, it probably interacts directly with APAF1. Interacts with LGALS3, ARF6 and ACTB. Interacts with RAB39A. As to expression, highly expressed in skeletal muscle, heart, kidney and pancreas. Expressed in choroid, retina and epidermal melanocytes. Expressed in eye muscles and thyroid follicular cells.

The protein localises to the nucleus. Its subcellular location is the cytoplasm. The protein resides in the cytoskeleton. In terms of biological role, regulates APAF1 expression and plays an important role in the regulation of stress-induced apoptosis. Promotes apoptosis by regulating three pathways, apoptosome up-regulation, LGALS3/galectin-3 down-regulation and NF-kappa-B inactivation. Regulates the redistribution of APAF1 into the nucleus after proapoptotic stress. Down-regulates the expression of LGALS3 by inhibiting NFKB1. Modulates isoactin dynamics to regulate the morphological alterations required for cell growth and motility. Interaction with ARF6 may modulate cell shape and motility after injury. May be involved in multiple neurite formation. The sequence is that of Uveal autoantigen with coiled-coil domains and ankyrin repeats (UACA) from Homo sapiens (Human).